Here is a 1053-residue protein sequence, read N- to C-terminus: Serine/threonine-protein phosphatase 6 regulatory ankyrin repeat subunit A (1053 aa).

ANK repeat units lie at residues 40–69, 73–102, 106–135, 139–168, 172–201, 205–234, 238–267, 271–301, 305–334, 338–367, 371–400, 404–433, 437–466, 470–500, 504–534, 549–578, 582–611, 616–645, 652–681, 685–714, 718–747, 755–784, 787–817, 822–851, 855–885, 889–918, and 925–954; these read EKRT…RVNA, KWLT…DVNA, NWQT…NVNV, AGRT…NINA, KDRR…EVTC, KSYT…DMNE, YGNT…IVNQ, KGFT…DVNM, DGKT…VIDC, NGNT…DTAK, HGMF…DIDT, FGRT…DFNK, FGRS…SVND, RGCT…NPGI, QGYN…DVLM, ATIS…DLDV, SGRT…SILV, LKRT…PQNA, NGQT…NVDA, WGRT…KCLL, RGRT…SMDA, HGYT…FQKT, NAFS…SIVN, KGRT…QVNS, TGKT…ELTL, SKNT…DRNL, and ALQT…SVLA. Ser-1007 and Ser-1011 each carry phosphoserine.

In terms of assembly, protein phosphatase 6 (PP6) holoenzyme is proposed to be a heterotrimeric complex formed by the catalytic subunit, a SAPS domain-containing subunit (PP6R) and an ankyrin repeat-domain containing regulatory subunit (ARS). Interacts with PPP6C, PPP6R1 and PPP6R3. Interacts with PPP1C and HNRPK. In terms of processing, ubiquitinated by the ECS(RAB40C) complex leading to its degradation and decreased PP6 activity.

Its subcellular location is the nucleus. The protein resides in the nucleoplasm. It is found in the cytoplasm. The protein localises to the cytosol. It localises to the cell projection. Its subcellular location is the lamellipodium. In terms of biological role, regulatory subunit of protein phosphatase 6 (PP6) that may be involved in the recognition of phosphoprotein substrates. Involved in the PP6-mediated dephosphorylation of NFKBIE opposing its degradation in response to TNF-alpha. Selectively inhibits the phosphatase activity of PPP1C. Targets PPP1C to modulate HNRPK phosphorylation. Involved in the PP6-mediated dephosphorylation of MOB1 and induced focal adhesion assembly during cell migration. The chain is Serine/threonine-protein phosphatase 6 regulatory ankyrin repeat subunit A from Homo sapiens (Human).